We begin with the raw amino-acid sequence, 152 residues long: UPF0225 protein YchJ (152 aa).

This sequence belongs to the UPF0225 family.

The protein is UPF0225 protein YchJ of Shigella flexneri serotype 5b (strain 8401).